A 450-amino-acid polypeptide reads, in one-letter code: Neuronal acetylcholine receptor subunit alpha-10 (450 aa).

An N-terminal signal peptide occupies residues 1 to 24 (MGLRSHHLSLGLLLLFLLPAECLG). Residues 25-237 (AEGRLALKLF…FTLLLRRRAA (213 aa)) lie on the Extracellular side of the membrane. Asn-40 and Asn-56 each carry an N-linked (GlcNAc...) asparagine glycan. 2 disulfide bridges follow: Cys-154–Cys-168 and Cys-218–Cys-219. 3 helical membrane-spanning segments follow: residues 238 to 258 (AYVC…PLAF), 268 to 288 (VSLG…LAES), and 302 to 322 (YMAT…IMNL). Over 323-428 (HYCGPSVRPV…WKRLARVMDR (106 aa)) the chain is Cytoplasmic. A disordered region spans residues 355 to 380 (EPCGQSRPPELSPSPQSPEGGAGPPA). The chain crosses the membrane as a helical span at residues 429 to 449 (FFLAIFFSMALVMSLLVLVQA).

Belongs to the ligand-gated ion channel (TC 1.A.9) family. Acetylcholine receptor (TC 1.A.9.1) subfamily. Alpha-10/CHRNA10 sub-subfamily. As to quaternary structure, forms homo- or heterooligomeric channels in conjunction with CHRNA10. The native outer hair cell receptor may be composed of CHRNA9:CHRNA10 heterooligomers. Found in the stoichiometric form (CHRNA9)2:(CHRNA10)3. Expressed in inner-ear tissue, tonsil, immortalized B-cells, cultured T-cells and peripheral blood lymphocytes.

It is found in the synaptic cell membrane. Its subcellular location is the cell membrane. The enzyme catalyses Ca(2+)(in) = Ca(2+)(out). The catalysed reaction is K(+)(in) = K(+)(out). It carries out the reaction Na(+)(in) = Na(+)(out). It catalyses the reaction Mg(2+)(in) = Mg(2+)(out). With respect to regulation, activated by a myriad of ligands such as acetylcholine. AChR activity is inhibited by the antagonists alpha-conotoxins RgIA and GeXXA, small disulfide-constrained peptides from cone snails. Component of neuronal acetylcholine receptors (nAChRs) that function as pentameric, ligand-gated cation channels with high calcium permeability. nAChRs are excitatory neurotrasnmitter receptors formed by a collection of nAChR subunits. Each nAchR subunit confers differential attributes to channel properties, including activation, deactivation and desensitization kinetics, pH sensitivity, cation permeability, and binding to allosteric modulators. Forms heteropentamers with CHRNA9. Expressed in the inner ear, in sympathetic neurons and in other non-neuronal cells, such as skin keratinocytes and lymphocytes. nAChR formed by CHRNA9:CHRNA10 is involved in modulation of auditory stimuli. The channel is permeable to a range of divalent cations including calcium, the influx of which may activate a potassium current which hyperpolarizes the cell membrane. In the ear, mediates synaptic transmission between efferent olivocochlear fibers and hair cells of the cochlea, this may lead to a reduction in basilar membrane motion, altering the activity of auditory nerve fibers and reducing the range of dynamic hearing. This may protect against acoustic trauma. May also regulate keratinocyte adhesion. This Homo sapiens (Human) protein is Neuronal acetylcholine receptor subunit alpha-10.